The primary structure comprises 398 residues: Lysophosphatidylserine lipase ABHD12 (398 aa).

A compositionally biased stretch (basic and acidic residues) spans 1 to 15 (MRKRTEPVTLEHERC). A disordered region spans residues 1-24 (MRKRTEPVTLEHERCAASGSSSSG). The Cytoplasmic portion of the chain corresponds to 1–74 (MRKRTEPVTL…RKSLWFRLRK (74 aa)). The helical transmembrane segment at 75 to 95 (ILLCVLGFYIAIPFLVKLCPG) threads the bilayer. Over 96 to 398 (IQAKLIFLNF…LGKSEPERQH (303 aa)) the chain is Extracellular. Asn-123 is a glycosylation site (N-linked (GlcNAc...) asparagine). Ser-246 serves as the catalytic Nucleophile. Active-site charge relay system residues include Asp-333 and His-372.

The protein belongs to the serine esterase family. Glycosylated.

The protein localises to the endoplasmic reticulum membrane. It is found in the mitochondrion. It carries out the reaction 1-(9Z-octadecenoyl)-sn-glycero-3-phospho-L-serine + H2O = sn-glycero-3-phospho-L-serine + (9Z)-octadecenoate + H(+). The catalysed reaction is 1-(9Z-octadecenoyl)-sn-glycero-3-phospho-(1'-sn-glycerol) + H2O = sn-glycero-3-phospho-(1'-sn-glycerol) + (9Z)-octadecenoate + H(+). It catalyses the reaction 1-(9Z-octadecenoyl)-sn-glycero-3-phospho-(1D-myo-inositol) + H2O = sn-glycero-3-phospho-1D-myo-inositol + (9Z)-octadecenoate + H(+). The enzyme catalyses 1-(9Z-octadecenoyl)-sn-glycero-3-phosphoethanolamine + H2O = sn-glycero-3-phosphoethanolamine + (9Z)-octadecenoate + H(+). It carries out the reaction 1-(9Z-octadecenoyl)-sn-glycero-3-phosphocholine + H2O = 1-(9Z-octadecenoyl)-sn-glycerol + phosphocholine + H(+). The catalysed reaction is 2-(9Z-octadecenoyl)-glycerol + H2O = glycerol + (9Z)-octadecenoate + H(+). It catalyses the reaction 1-hexadecanoyl-sn-glycero-3-phospho-L-serine + H2O = sn-glycero-3-phospho-L-serine + hexadecanoate + H(+). The enzyme catalyses 2-(5Z,8Z,11Z,14Z-eicosatetraenoyl)-glycerol + H2O = glycerol + (5Z,8Z,11Z,14Z)-eicosatetraenoate + H(+). It carries out the reaction Hydrolyzes glycerol monoesters of long-chain fatty acids.. The catalysed reaction is 1-decanoylglycerol + H2O = decanoate + glycerol + H(+). It catalyses the reaction 1-dodecanoylglycerol + H2O = dodecanoate + glycerol + H(+). The enzyme catalyses 1-tetradecanoylglycerol + H2O = tetradecanoate + glycerol + H(+). It carries out the reaction 2-hexadecanoylglycerol + H2O = glycerol + hexadecanoate + H(+). The catalysed reaction is 1-(9Z-octadecenoyl)-glycerol + H2O = glycerol + (9Z)-octadecenoate + H(+). It catalyses the reaction 2-(9Z,12Z-octadecadienoyl)-glycerol + H2O = (9Z,12Z)-octadecadienoate + glycerol + H(+). The enzyme catalyses 1-(5Z,8Z,11Z,14Z-eicosatetraenoyl)-glycerol + H2O = glycerol + (5Z,8Z,11Z,14Z)-eicosatetraenoate + H(+). It carries out the reaction 1-(9Z,12Z-octadecadienoyl)-glycerol + H2O = (9Z,12Z)-octadecadienoate + glycerol + H(+). The catalysed reaction is 1-hexadecanoylglycerol + H2O = glycerol + hexadecanoate + H(+). It catalyses the reaction 1-octadecanoylglycerol + H2O = octadecanoate + glycerol + H(+). The enzyme catalyses 1-octadecanoyl-2-(9,10-epoxyoctadecanoyl)-sn-glycero-3-phospho-L-serine + H2O = 9,10-epoxyoctadecanoate + 1-octadecanoyl-sn-glycero-3-phosphoserine + H(+). It carries out the reaction 1-octadecanoyl-2-(10-hydroxyoctadecanoyl)-sn-glycero-3-phospho-L-serine + H2O = 1-octadecanoyl-sn-glycero-3-phosphoserine + 10-hydroxyoctadecanoate + H(+). The catalysed reaction is 1-hexadecanoyl-2-(10-hydroxyoctadecanoyl)-sn-glycero-3-phospho-L-serine + H2O = 10-hydroxyoctadecanoate + 1-hexadecanoyl-sn-glycero-3-phospho-L-serine + H(+). With respect to regulation, selectively inhibited by DO264 (N-3-pyridyl-N'-(1-[3-chloro-4-{2-chloro-4-(trifluoromethoxy)phenoxy}pyridine-2-yl]piperidin-4-yl)thiourea). Functionally, lysophosphatidylserine (LPS) lipase that mediates the hydrolysis of lysophosphatidylserine, a class of signaling lipids that regulates immunological and neurological processes. Represents a major lysophosphatidylserine lipase in the brain, thereby playing a key role in the central nervous system. Also able to hydrolyze oxidized phosphatidylserine; oxidized phosphatidylserine is produced in response to severe inflammatory stress and constitutes a proapoptotic 'eat me' signal. Also has monoacylglycerol (MAG) lipase activity: hydrolyzes 2-arachidonoylglycerol (2-AG), thereby acting as a regulator of endocannabinoid signaling pathways. Has a strong preference for very-long-chain lipid substrates; substrate specificity is likely due to improved catalysis and not improved substrate binding. This chain is Lysophosphatidylserine lipase ABHD12, found in Mus musculus (Mouse).